A 60-amino-acid chain; its full sequence is Large ribosomal subunit protein eL37 (60 aa).

4 residues coordinate Zn(2+): cysteine 19, cysteine 22, cysteine 34, and cysteine 37. The C4-type zinc-finger motif lies at 19–37 (CRRCGRISFHAQKKVCSSC).

The protein belongs to the eukaryotic ribosomal protein eL37 family. It depends on Zn(2+) as a cofactor.

Binds to the 23S rRNA. The polypeptide is Large ribosomal subunit protein eL37 (Methanoregula boonei (strain DSM 21154 / JCM 14090 / 6A8)).